The sequence spans 515 residues: 2,3-bisphosphoglycerate-independent phosphoglycerate mutase (515 aa).

Mn(2+) contacts are provided by aspartate 14 and serine 64. Serine 64 functions as the Phosphoserine intermediate in the catalytic mechanism. Residues histidine 125, 155–156, arginine 187, arginine 193, 263–266, and lysine 337 contribute to the substrate site; these read RD and RADR. Mn(2+)-binding residues include aspartate 404, histidine 408, aspartate 445, histidine 446, and histidine 464.

It belongs to the BPG-independent phosphoglycerate mutase family. Monomer. Mn(2+) is required as a cofactor.

The enzyme catalyses (2R)-2-phosphoglycerate = (2R)-3-phosphoglycerate. Its pathway is carbohydrate degradation; glycolysis; pyruvate from D-glyceraldehyde 3-phosphate: step 3/5. Catalyzes the interconversion of 2-phosphoglycerate and 3-phosphoglycerate. The polypeptide is 2,3-bisphosphoglycerate-independent phosphoglycerate mutase (Yersinia pseudotuberculosis serotype I (strain IP32953)).